A 275-amino-acid polypeptide reads, in one-letter code: NADPH-dependent 7-cyano-7-deazaguanine reductase (275 aa).

A substrate-binding site is contributed by 81-83 (IES). 83 to 84 (SK) is an NADPH binding site. The active-site Thioimide intermediate is C181. D188 serves as the catalytic Proton donor. 220–221 (HE) is a binding site for substrate. 249 to 250 (RG) lines the NADPH pocket.

It belongs to the GTP cyclohydrolase I family. QueF type 2 subfamily. As to quaternary structure, homodimer.

The protein resides in the cytoplasm. It carries out the reaction 7-aminomethyl-7-carbaguanine + 2 NADP(+) = 7-cyano-7-deazaguanine + 2 NADPH + 3 H(+). It functions in the pathway tRNA modification; tRNA-queuosine biosynthesis. In terms of biological role, catalyzes the NADPH-dependent reduction of 7-cyano-7-deazaguanine (preQ0) to 7-aminomethyl-7-deazaguanine (preQ1). The protein is NADPH-dependent 7-cyano-7-deazaguanine reductase of Xylella fastidiosa (strain M12).